The chain runs to 174 residues: Ferredoxin-thioredoxin reductase, variable chain, chloroplastic (174 aa).

The N-terminal 62 residues, 1–62, are a transit peptide targeting the chloroplast; that stretch reads MTTGVAVMSS…RTRARLAICC (62 aa). The span at 69–81 shows a compositional bias: low complexity; that stretch reads DSSTGFDSSSSSP. The tract at residues 69-89 is disordered; sequence DSSTGFDSSSSSPPEEDEELK. Phosphoserine is present on residues S70 and S71.

Belongs to the ferredoxin thioredoxin reductase alpha subunit family. As to quaternary structure, heterodimer of subunit A (variable subunit) and subunit B (catalytic subunit). Heterodimeric FTR forms a complex with ferredoxin and thioredoxin.

It localises to the plastid. The protein localises to the chloroplast. Its function is as follows. Variable subunit of the ferredoxin-thioredoxin reductase (FTR), which catalyzes the two-electron reduction of thioredoxins by the electrons provided by reduced ferredoxin. This chain is Ferredoxin-thioredoxin reductase, variable chain, chloroplastic (FTRV), found in Spinacia oleracea (Spinach).